We begin with the raw amino-acid sequence, 207 residues long: MTDILASTEQPPLVRSDMNLVWLDMEMTGLEPDSDRIIEIAVVVTNSTLDRMVEGPVLAIHQSDETLAGMDQWNQNTHGRSGLIDRVKASTVSEADATEQIRDFLSVYVPPGKSPMCGNSICQDRRFMARWMPELERFFHYRNLDVSTLKELCRRWQPAIYKGFQKRAMHTALADIHESIDELKYYREHFLIPSAPDAANGAEKAAE.

The Exonuclease domain maps to 20-183; that stretch reads LVWLDMEMTG…ADIHESIDEL (164 aa). Tyr141 is a catalytic residue.

The protein belongs to the oligoribonuclease family.

It is found in the cytoplasm. In terms of biological role, 3'-to-5' exoribonuclease specific for small oligoribonucleotides. The polypeptide is Oligoribonuclease (Paraburkholderia xenovorans (strain LB400)).